We begin with the raw amino-acid sequence, 387 residues long: Succinate--CoA ligase [ADP-forming] subunit beta (387 aa).

Residues 9–236 (RDLFEKYGVP…KAAADPLEAK (228 aa)) enclose the ATP-grasp domain. ATP contacts are provided by residues Lys45, 52 to 54 (GRG), Ala94, and Glu99. 2 residues coordinate Mg(2+): Asn191 and Asp205. Residues Asn256 and 318–320 (GIT) contribute to the substrate site.

The protein belongs to the succinate/malate CoA ligase beta subunit family. As to quaternary structure, heterotetramer of two alpha and two beta subunits. Mg(2+) serves as cofactor.

The enzyme catalyses succinate + ATP + CoA = succinyl-CoA + ADP + phosphate. It catalyses the reaction GTP + succinate + CoA = succinyl-CoA + GDP + phosphate. It participates in carbohydrate metabolism; tricarboxylic acid cycle; succinate from succinyl-CoA (ligase route): step 1/1. Its function is as follows. Succinyl-CoA synthetase functions in the citric acid cycle (TCA), coupling the hydrolysis of succinyl-CoA to the synthesis of either ATP or GTP and thus represents the only step of substrate-level phosphorylation in the TCA. The beta subunit provides nucleotide specificity of the enzyme and binds the substrate succinate, while the binding sites for coenzyme A and phosphate are found in the alpha subunit. This Leifsonia xyli subsp. xyli (strain CTCB07) protein is Succinate--CoA ligase [ADP-forming] subunit beta.